A 148-amino-acid polypeptide reads, in one-letter code: Lysozyme C (148 aa).

The N-terminal stretch at 1–18 (MKAVIILGLVLLSVTVQG) is a signal peptide. One can recognise a C-type lysozyme domain in the interval 19–148 (KIFERCELAR…VSQYVQGCGV (130 aa)). 4 disulfide bridges follow: cysteine 24/cysteine 146, cysteine 48/cysteine 134, cysteine 83/cysteine 99, and cysteine 95/cysteine 113. Catalysis depends on residues glutamate 53 and aspartate 71.

This sequence belongs to the glycosyl hydrolase 22 family. As to quaternary structure, monomer.

The protein localises to the secreted. The enzyme catalyses Hydrolysis of (1-&gt;4)-beta-linkages between N-acetylmuramic acid and N-acetyl-D-glucosamine residues in a peptidoglycan and between N-acetyl-D-glucosamine residues in chitodextrins.. In terms of biological role, lysozymes have primarily a bacteriolytic function; those in tissues and body fluids are associated with the monocyte-macrophage system and enhance the activity of immunoagents. In Miopithecus talapoin (Angolan talapoin), this protein is Lysozyme C (LYZ).